Consider the following 147-residue polypeptide: Sec-independent protein translocase protein TatB (147 aa).

Residues 1–21 form a helical membrane-spanning segment; sequence MFDFGFSELIVIAVVTLIVVG. The segment at 117 to 147 is disordered; the sequence is APAPMSLAPHGDAASAGREPAAVPGSGPEKA.

It belongs to the TatB family. In terms of assembly, the Tat system comprises two distinct complexes: a TatABC complex, containing multiple copies of TatA, TatB and TatC subunits, and a separate TatA complex, containing only TatA subunits. Substrates initially bind to the TatABC complex, which probably triggers association of the separate TatA complex to form the active translocon.

The protein resides in the cell inner membrane. Its function is as follows. Part of the twin-arginine translocation (Tat) system that transports large folded proteins containing a characteristic twin-arginine motif in their signal peptide across membranes. Together with TatC, TatB is part of a receptor directly interacting with Tat signal peptides. TatB may form an oligomeric binding site that transiently accommodates folded Tat precursor proteins before their translocation. This Aromatoleum aromaticum (strain DSM 19018 / LMG 30748 / EbN1) (Azoarcus sp. (strain EbN1)) protein is Sec-independent protein translocase protein TatB.